Reading from the N-terminus, the 284-residue chain is ADP-polyphosphate phosphotransferase 3 (284 aa).

Basic and acidic residues-rich tracts occupy residues 1-22 and 260-277; these read MDKH…RKSA and DLGK…DTRR. Disordered regions lie at residues 1-32 and 260-284; these read MDKH…TRSG and DLGK…PNLF.

It belongs to the polyphosphate kinase 2 (PPK2) family. Class I subfamily.

The enzyme catalyses [phosphate](n) + ATP = [phosphate](n+1) + ADP. It catalyses the reaction [phosphate](n) + GTP = [phosphate](n+1) + GDP. Uses inorganic polyphosphate (polyP) as a donor to convert ADP to ATP. Can also convert GDP to GTP, with lower efficiency. The sequence is that of ADP-polyphosphate phosphotransferase 3 from Rhizobium meliloti (strain 1021) (Ensifer meliloti).